The following is a 488-amino-acid chain: MVQGTTSDAGKSTVVAGLCRVLARAGMRVAPFKPQNMALNSAVTADGGEIGRAQALQAQAARVEPHTDMNPVLLKPSSDTGAQIIIHGKARLDLDARAYHAYKPEAMKAVLASHERLTQAYDVVVVEGAGSPAEINLRDRDIANMGFAERVDCPVVLVADIDRGGVFAHLVGTLDCLSDSERARVTGFIINRFRGDISLLQPGLDWLEARTGKPVFGVLPYLHGLHLDAEDAIVGAQSAKRGTPDALLRVIVPVLPRISNHTDFDALRAHPQVDLRFIGPGMPVPPADLVILPGSKSVRADLDFLRANGWEPALRRHLRYGGKVIGICGGMQMLGRQIHDPAGHEGPAGSSAGFGWLDYETTLAPHKQLRRVSGRLADADREAAVSGYEIHMGVSTGSGLERPALWLDDENGTRRADGACSEDGQVLATYVHGVFDEPTACEGLLRWAGLDGAQGIDLAALREASIERLADTLASHLDLGAMFAPLRR.

A GATase cobBQ-type domain is found at 247 to 440 (LLRVIVPVLP…VHGVFDEPTA (194 aa)). C328 serves as the catalytic Nucleophile. Residue H432 is part of the active site.

Belongs to the CobB/CobQ family. CobQ subfamily.

It functions in the pathway cofactor biosynthesis; adenosylcobalamin biosynthesis. Catalyzes amidations at positions B, D, E, and G on adenosylcobyrinic A,C-diamide. NH(2) groups are provided by glutamine, and one molecule of ATP is hydrogenolyzed for each amidation. The sequence is that of Cobyric acid synthase from Cupriavidus pinatubonensis (strain JMP 134 / LMG 1197) (Cupriavidus necator (strain JMP 134)).